We begin with the raw amino-acid sequence, 80 residues long: Exodeoxyribonuclease 7 small subunit (80 aa).

The protein belongs to the XseB family. In terms of assembly, heterooligomer composed of large and small subunits.

It localises to the cytoplasm. The enzyme catalyses Exonucleolytic cleavage in either 5'- to 3'- or 3'- to 5'-direction to yield nucleoside 5'-phosphates.. Its function is as follows. Bidirectionally degrades single-stranded DNA into large acid-insoluble oligonucleotides, which are then degraded further into small acid-soluble oligonucleotides. This chain is Exodeoxyribonuclease 7 small subunit, found in Vibrio parahaemolyticus serotype O3:K6 (strain RIMD 2210633).